The primary structure comprises 343 residues: ATP phosphoribosyltransferase regulatory subunit (343 aa).

Residues 324-343 (RANGRAKRPARPRRSPPRPR) form a disordered region. Residues 327-343 (GRAKRPARPRRSPPRPR) are compositionally biased toward basic residues.

The protein belongs to the class-II aminoacyl-tRNA synthetase family. HisZ subfamily. As to quaternary structure, heteromultimer composed of HisG and HisZ subunits.

Its subcellular location is the cytoplasm. The protein operates within amino-acid biosynthesis; L-histidine biosynthesis; L-histidine from 5-phospho-alpha-D-ribose 1-diphosphate: step 1/9. In terms of biological role, required for the first step of histidine biosynthesis. May allow the feedback regulation of ATP phosphoribosyltransferase activity by histidine. The chain is ATP phosphoribosyltransferase regulatory subunit from Anaeromyxobacter sp. (strain Fw109-5).